The chain runs to 611 residues: U-box domain-containing protein 12 (611 aa).

Residues 227-301 (IIPDEFRCPI…SQWCEANGIE (75 aa)) enclose the U-box domain. ARM repeat units follow at residues 355 to 394 (VNNRICIAEAGAIPLLVNLLSSSDPRTQEHAVTALLNLSI), 396 to 435 (ENNKASIVDSHAIPKIVEVLKTGSMETRENAAATLFSLSV), 437 to 476 (DENKVTIGAAGAIPPLINLLCDGSPRGKKDAATAIFNLCI), and 478 to 517 (QGNKVRAVKAGIVIHLMNFLVDPTGGMIDEALSLLSILAG).

The catalysed reaction is S-ubiquitinyl-[E2 ubiquitin-conjugating enzyme]-L-cysteine + [acceptor protein]-L-lysine = [E2 ubiquitin-conjugating enzyme]-L-cysteine + N(6)-ubiquitinyl-[acceptor protein]-L-lysine.. The protein operates within protein modification; protein ubiquitination. Its function is as follows. Possesses E3 ubiquitin-protein ligase in vitro. The polypeptide is U-box domain-containing protein 12 (PUB12) (Oryza sativa subsp. japonica (Rice)).